Reading from the N-terminus, the 175-residue chain is NAD(P)H-quinone oxidoreductase subunit J (175 aa).

It belongs to the complex I 30 kDa subunit family. As to quaternary structure, NDH-1 can be composed of about 15 different subunits; different subcomplexes with different compositions have been identified which probably have different functions.

The protein resides in the cellular thylakoid membrane. It carries out the reaction a plastoquinone + NADH + (n+1) H(+)(in) = a plastoquinol + NAD(+) + n H(+)(out). The catalysed reaction is a plastoquinone + NADPH + (n+1) H(+)(in) = a plastoquinol + NADP(+) + n H(+)(out). Functionally, NDH-1 shuttles electrons from an unknown electron donor, via FMN and iron-sulfur (Fe-S) centers, to quinones in the respiratory and/or the photosynthetic chain. The immediate electron acceptor for the enzyme in this species is believed to be plastoquinone. Couples the redox reaction to proton translocation, and thus conserves the redox energy in a proton gradient. Cyanobacterial NDH-1 also plays a role in inorganic carbon-concentration. This Trichormus variabilis (strain ATCC 29413 / PCC 7937) (Anabaena variabilis) protein is NAD(P)H-quinone oxidoreductase subunit J.